Reading from the N-terminus, the 374-residue chain is Hydroxylysine kinase (374 aa).

The Proton acceptor role is filled by Asp228.

The protein belongs to the aminoglycoside phosphotransferase family.

The protein resides in the cytoplasm. It catalyses the reaction (5R)-5-hydroxy-L-lysine + GTP = (5R)-5-phosphooxy-L-lysine + GDP + H(+). Catalyzes the GTP-dependent phosphorylation of 5-hydroxy-L-lysine. This is Hydroxylysine kinase (hykk) from Xenopus laevis (African clawed frog).